Consider the following 87-residue polypeptide: Small ribosomal subunit protein bS16 (87 aa).

Belongs to the bacterial ribosomal protein bS16 family.

In Nitrosospira multiformis (strain ATCC 25196 / NCIMB 11849 / C 71), this protein is Small ribosomal subunit protein bS16.